Reading from the N-terminus, the 1003-residue chain is Serine/threonine-protein kinase spk-1 (1003 aa).

Disordered regions lie at residues Asn-92 to Glu-112, Asn-169 to Ser-309, and Arg-337 to Gly-408. Over residues Ser-202–Asp-211 the composition is skewed to acidic residues. Basic and acidic residues predominate over residues Ser-248 to Lys-265. The segment covering Thr-285–Gly-300 has biased composition (low complexity). Residues Lys-346–Asp-359 are compositionally biased toward basic and acidic residues. The region spanning Tyr-422–Leu-904 is the Protein kinase domain. ATP is bound by residues Leu-428–Val-436 and Lys-451. Asp-555 acts as the Proton acceptor in catalysis. The tract at residues Asp-927 to Gln-1003 is disordered. A compositionally biased stretch (basic and acidic residues) spans Gly-936–Ser-953. Positions Glu-954–Gly-964 are enriched in low complexity. Over residues Val-983–Ile-992 the composition is skewed to polar residues. Over residues Asp-994–Gln-1003 the composition is skewed to basic and acidic residues.

It belongs to the protein kinase superfamily. Ser/Thr protein kinase family. In terms of assembly, interacts with rsp-3. As to expression, predominantly coexpressed with rsp-3 in adult hermaphrodite germlines.

The enzyme catalyses L-seryl-[protein] + ATP = O-phospho-L-seryl-[protein] + ADP + H(+). It catalyses the reaction L-threonyl-[protein] + ATP = O-phospho-L-threonyl-[protein] + ADP + H(+). In terms of biological role, required for embryogenesis and germline development in both adult hermaphrodites and males. SR-protein kinase (SRPK) that binds directly to and phosphorylates the RS domain of rsp-3/CeSF2 in vitro. The polypeptide is Serine/threonine-protein kinase spk-1 (spk-1) (Caenorhabditis elegans).